The following is an 825-amino-acid chain: Hypoxia-inducible factor 1-alpha (825 aa).

The tract at residues 1–30 is disordered; sequence MEGAGGENEKKKMSSERRKEKSRDAARSRR. The tract at residues 1-401 is interaction with TSGA10; that stretch reads MEGAGGENEK…KEPDALTLLA (401 aa). Residues 7 to 30 are compositionally biased toward basic and acidic residues; the sequence is ENEKKKMSSERRKEKSRDAARSRR. One can recognise a bHLH domain in the interval 17-70; the sequence is RRKEKSRDAARSRRSKESEVFYELAHQLPLPHNVSSHLDKASVMRLTISYLRVR. The DNA-binding stretch occupies residues 21–30; the sequence is KSRDAARSRR. Residues 85 to 158 enclose the PAS 1 domain; the sequence is KAQMNCFYLK…THRNGPVRKG (74 aa). Residues 170 to 191 form a required for heterodimer formation with ARNT region; the sequence is RMKCTLTSRGRTMNIKSATWKV. One can recognise a PAS 2 domain in the interval 228–298; it reads PHPSNIEIPL…KTHHDMFTKG (71 aa). Ser247 is modified (phosphoserine; by CK1). The PAC domain maps to 302–345; that stretch reads TGQYRMLAKRGGYVWVETQATVIYNTKDSQPQCIVCVNYVVSGI. The tract at residues 401-602 is ODD; the sequence is APAAGDTIIS…STVTGFQQTQ (202 aa). A 4-hydroxyproline modification is found at Pro402. Over residues 492-516 the composition is skewed to polar residues; that stretch reads QIQDQPASPSDGSTRQSSPEPNSPS. The disordered stretch occupies residues 492–520; the sequence is QIQDQPASPSDGSTRQSSPEPNSPSEYCF. The NTAD stretch occupies residues 530-574; the sequence is FKLELVEKLFAEDTEAKNPFSAQDTDLDLEMLAPYIPMDDDFQLR. Lys531 bears the N6-acetyllysine; alternate mark. Lys531 is covalently cross-linked (Glycyl lysine isopeptide (Lys-Gly) (interchain with G-Cter in ubiquitin); alternate). Residues Lys537 and Lys546 each participate in a glycyl lysine isopeptide (Lys-Gly) (interchain with G-Cter in ubiquitin) cross-link. Ser550 is subject to Phosphoserine; by GSK3-beta. The residue at position 554 (Thr554) is a Phosphothreonine; by GSK3-beta. A 4-hydroxyproline modification is found at Pro563. The residue at position 575 (Ser575) is a Phosphoserine; by PLK3. An ID region spans residues 575 to 784; the sequence is SFDQLSPLES…SDLACRLLGQ (210 aa). Disordered stretches follow at residues 579–602 and 654–674; these read LSPL…QQTQ and AKAS…RAGK. Position 588 is a phosphoserine; by GSK3-beta (Ser588). Residues 654–667 show a composition bias toward polar residues; sequence AKASAYSGTHSRTA. A Phosphoserine; by PLK3 modification is found at Ser657. Residues 717 to 721 carry the Nuclear localization signal motif; sequence RKRKM. The CTAD stretch occupies residues 785-825; it reads SMDESGLPQLTSYDCEVNAPIQGSRNLLQGEELLRALDQVN. S-nitrosocysteine is present on Cys799. At Asn802 the chain carries (3S)-3-hydroxyasparagine.

As to quaternary structure, interacts with the ARNT; forms a heterodimer that binds core DNA sequence 5'-TACGTG-3' within the hypoxia response element (HRE) of target gene promoters. Interacts with COPS5; the interaction increases the transcriptional activity of HIF1A through increased stability. Interacts with EP300 (via TAZ-type 1 domains); the interaction is stimulated in response to hypoxia and inhibited by CITED2. Interacts with CREBBP (via TAZ-type 1 domains). Interacts with NCOA1, NCOA2, APEX1 and HSP90. Interacts (hydroxylated within the ODD domain) with VHLL (via beta domain); the interaction, leads to polyubiquitination and subsequent HIF1A proteasomal degradation. During hypoxia, sumoylated HIF1A also binds VHL; the interaction promotes the ubiquitination of HIF1A. Interacts with SENP1; the interaction desumoylates HIF1A resulting in stabilization and activation of transcription. Interacts (via the ODD domain) with NAA10; the interaction appears not to acetylate HIF1A nor have any affect on protein stability, during hypoxia. Interacts with RWDD3; the interaction enhances HIF1A sumoylation. Interacts with TSGA10. Interacts with HIF3A. Interacts with RORA (via the DNA binding domain); the interaction enhances HIF1A transcription under hypoxia through increasing protein stability. Interaction with PSMA7 inhibits the transactivation activity of HIF1A under both normoxic and hypoxia-mimicking conditions. Interacts with USP20. Interacts with RACK1; promotes HIF1A ubiquitination and proteasome-mediated degradation. Interacts (via N-terminus) with USP19. Interacts with SIRT2. Interacts (deacetylated form) with EGLN1. Interacts with CBFA2T3. Interacts with HSP90AA1 and HSP90AB1. Interacts with DCUN1D1; this interaction increases the interaction between VHL and DCUN1D1. Interacts with HIF1AN. Post-translationally, S-nitrosylation of Cys-799 may be responsible for increased recruitment of p300 coactivator necessary for transcriptional activity of HIF-1 complex. In terms of processing, acetylation of Lys-531 by ARD1 increases interaction with VHL and stimulates subsequent proteasomal degradation. Deacetylated by SIRT2 increases its interaction with and hydroxylation by EGLN1 thereby inactivating HIF1A activity by inducing its proteasomal degradation. Ubiquitinated; in normoxia, following hydroxylation and interaction with VHL. Lys-531 appears to be the principal site of ubiquitination. Clioquinol, the Cu/Zn-chelator, inhibits ubiquitination through preventing hydroxylation at Asn-802. Ubiquitinated by E3 ligase VHL. Deubiquitinated by UCHL1. Post-translationally, requires phosphorylation for DNA-binding. Phosphorylation at Ser-247 by CSNK1D/CK1 represses kinase activity and impairs ARNT binding. Phosphorylation by GSK3-beta and PLK3 promote degradation by the proteasome. In terms of processing, the iron and 2-oxoglutarate dependent 3-hydroxylation of asparagine is (S) stereospecific within HIF CTAD domains. Sumoylated; with SUMO1 under hypoxia. Sumoylation is enhanced through interaction with RWDD3. Both sumoylation and desumoylation seem to be involved in the regulation of its stability during hypoxia. Sumoylation can promote either its stabilization or its VHL-dependent degradation by promoting hydroxyproline-independent HIF1A-VHL complex binding, thus leading to HIF1A ubiquitination and proteasomal degradation. Desumoylation by SENP1 increases its stability amd transcriptional activity. There is a disaccord between various publications on the effect of sumoylation and desumoylation on its stability and transcriptional activity. Post-translationally, in normoxia, is hydroxylated on Pro-402 and Pro-563 in the oxygen-dependent degradation domain (ODD) by EGLN1/PHD2 and EGLN2/PHD1. EGLN3/PHD3 has also been shown to hydroxylate Pro-563. The hydroxylated prolines promote interaction with VHL, initiating rapid ubiquitination and subsequent proteasomal degradation. Deubiquitinated by USP20. Under hypoxia, proline hydroxylation is impaired and ubiquitination is attenuated, resulting in stabilization. In normoxia, is hydroxylated on Asn-802 by HIF1AN, thus abrogating interaction with CREBBP and EP300 and preventing transcriptional activation. Repressed by iron ion, via Fe(2+) prolyl hydroxylase (PHD) enzymes-mediated hydroxylation and subsequent proteasomal degradation. In terms of tissue distribution, expressed in the kidney, higher expression is seen in the renal medulla than in the cortex. Expressed also in the perivenous zone of the liver.

It is found in the cytoplasm. The protein localises to the nucleus. The protein resides in the nucleus speckle. Its activity is regulated as follows. Induced by reactive oxygen species (ROS). Its function is as follows. Functions as a master transcriptional regulator of the adaptive response to hypoxia. Under hypoxic conditions, activates the transcription of over 40 genes, including erythropoietin, glucose transporters, glycolytic enzymes, vascular endothelial growth factor, HILPDA, and other genes whose protein products increase oxygen delivery or facilitate metabolic adaptation to hypoxia. Plays an essential role in embryonic vascularization, tumor angiogenesis and pathophysiology of ischemic disease. Heterodimerizes with ARNT; heterodimer binds to core DNA sequence 5'-TACGTG-3' within the hypoxia response element (HRE) of target gene promoters. Activation requires recruitment of transcriptional coactivators such as CREBBP and EP300. Activity is enhanced by interaction with NCOA1 and/or NCOA2. Interaction with redox regulatory protein APEX1 seems to activate CTAD and potentiates activation by NCOA1 and CREBBP. Involved in the axonal distribution and transport of mitochondria in neurons during hypoxia. The polypeptide is Hypoxia-inducible factor 1-alpha (Hif1a) (Rattus norvegicus (Rat)).